We begin with the raw amino-acid sequence, 476 residues long: uncharacterized protein (476 aa).

The signal sequence occupies residues 1–24; it reads MIRKSATGVIVALAVIWGGGTWYT.

To E.coli YdgA and H.influenzae HI_1236.

This is an uncharacterized protein from Escherichia coli (strain K12).